Consider the following 159-residue polypeptide: Na(+)/H(+) antiporter subunit E1 (159 aa).

The next 4 membrane-spanning stretches (helical) occupy residues 1 to 21 (MAVQ…VTNS), 27 to 47 (FVLG…VLPG), 49 to 69 (FYVI…IELI), and 101 to 121 (WQIV…VLGV).

Belongs to the CPA3 antiporters (TC 2.A.63) subunit E family. As to quaternary structure, may form a heterooligomeric complex that consists of seven subunits: mnhA1, mnhB1, mnhC1, mnhD1, mnhE1, mnhF1 and mnhG1.

Its subcellular location is the cell membrane. In terms of biological role, mnh complex is a Na(+)/H(+) antiporter involved in Na(+) excretion. The protein is Na(+)/H(+) antiporter subunit E1 (mnhE1) of Staphylococcus aureus (strain bovine RF122 / ET3-1).